Here is a 367-residue protein sequence, read N- to C-terminus: Voltage-gated potassium channel subunit beta-2 (367 aa).

3 positions are modified to phosphoserine: S9, S14, and S20. At R28 the chain carries Asymmetric dimethylarginine; alternate. The residue at position 28 (R28) is an Omega-N-methylarginine; alternate. S31 bears the Phosphoserine mark. NADP(+) contacts are provided by T56, W57, Q63, and D85. Y90 serves as the catalytic Proton donor/acceptor. S112 bears the Phosphoserine mark. K124 is modified (N6-acetyllysine). Positions 158, 188, 189, 214, 243, 244, 245, 246, 247, 248, 254, 262, 264, 323, 325, 329, 332, and 333 each coordinate NADP(+).

Belongs to the shaker potassium channel beta subunit family. As to quaternary structure, homotetramer. Interaction with tetrameric potassium channel alpha subunits gives rise to a heterooctamer. Identified in potassium channel complexes containing KCNA1, KCNA2, KCNA4, KCNA5, KCNA6, KCNAB1, KCNAB2 and KCND3. Interacts (in unphosphorylated form) with MAPRE1. Forms a ternary complex with SQSTM1 and PRKCZ. In terms of processing, phosphorylated by PRKCZ; may be regulated by incorporation in a complex composed of PRKCZ and SQSTM1. In terms of tissue distribution, detected in brain. Detected at basket cell terminals in cerebellum and in the juxtaparanodal region of nodes of Ranvier (at protein level). Strongest expression in brain and eye. Highest levels in brain detected in brainstem and diencephalon. Strong expression also detected in lung and heart. Moderate expression in kidney, T-lymphocytes and skeletal muscle.

It localises to the cytoplasm. The protein resides in the membrane. Its subcellular location is the cell membrane. It is found in the cell projection. The protein localises to the axon. It localises to the synapse. The protein resides in the synaptosome. Its subcellular location is the cytoskeleton. The enzyme catalyses hydroxyacetone + NADP(+) = methylglyoxal + NADPH + H(+). The catalysed reaction is (E)-4-oxonon-2-en-1-ol + NADP(+) = (E)-4-oxonon-2-enal + NADPH + H(+). In terms of biological role, regulatory subunit of the voltage-gated potassium (Kv) Shaker channel family. Shaker channels are composed of pore-forming and potassium-conducting alpha subunits and of regulatory beta subunits. The beta-2/KCNAB2 subunit promotes potassium channel closure via a mechanism that does not involve physical obstruction of the channel pore. Promotes the inactivation of Kv1.4/KCNA4 and Kv1.5/KCNA5 alpha subunit-containing channels. Displays nicotinamide adenine dinucleotide phosphate (NADPH)-dependent aldoketoreductase activity by catalyzing the NADPH-dependent reduction of a wide range of aldehyde and ketone substrates. Substrate specificity includes methylglyoxal, 9,10-phenanthrenequinone, prostaglandin J2, 4-nitrobenzaldehyde, 4-nitroacetophenone and 4-oxo-trans-2-nonenal (in vitro, no physiological substrate identified yet). The binding of oxidized and reduced nucleotide cofactors alters Kv channel gating and may contribute to dynamic fine tuning of cell excitability. Contributes to the regulation of nerve signaling, and prevents neuronal hyperexcitability. The chain is Voltage-gated potassium channel subunit beta-2 from Mus musculus (Mouse).